The following is a 629-amino-acid chain: Extracellular metalloproteinase 10 (629 aa).

Residues 1 to 19 form the signal peptide; it reads MHGLLLAAGLLSLPLYTIA. Positions 20-240 are excised as a propeptide; sequence HTQPSGALSR…VHNVVDYVAH (221 aa). Residues asparagine 281 and asparagine 331 are each glycosylated (N-linked (GlcNAc...) asparagine). Histidine 424 provides a ligand contact to Zn(2+). Glutamate 425 is a catalytic residue. Histidine 428 is a Zn(2+) binding site. N-linked (GlcNAc...) asparagine glycans are attached at residues asparagine 469 and asparagine 617.

It belongs to the peptidase M36 family. The cofactor is Zn(2+).

The protein resides in the secreted. Functionally, secreted metalloproteinase that allows assimilation of proteinaceous substrates and probably acts as a virulence factor. This chain is Extracellular metalloproteinase 10 (MEP10), found in Coccidioides posadasii (strain C735) (Valley fever fungus).